We begin with the raw amino-acid sequence, 1382 residues long: Hepatocyte growth factor receptor (1382 aa).

A signal peptide spans Met1–Gly24. At Glu25–Leu935 the chain is on the extracellular side. The region spanning Lys27 to Leu516 is the Sema domain. A glycan (N-linked (GlcNAc...) asparagine) is linked at Asn45. Disulfide bonds link Cys95-Cys101, Cys98-Cys160, Cys133-Cys141, and Cys173-Cys176. N-linked (GlcNAc...) asparagine glycosylation occurs at Asn106. 2 N-linked (GlcNAc...) asparagine glycosylation sites follow: Asn203 and Asn359. Intrachain disulfides connect Cys299–Cys364 and Cys386–Cys398. Asn400 and Asn406 each carry an N-linked (GlcNAc...) asparagine glycan. Cystine bridges form between Cys521–Cys539, Cys527–Cys562, Cys530–Cys546, and Cys542–Cys552. IPT/TIG domains follow at residues Pro564–Val656, Pro658–Gln740, and Pro743–Val837. O-linked (Man) threonine glycosylation is present at Thr583. N-linked (GlcNAc...) asparagine glycans are attached at residues Asn608 and Asn636. 2 O-linked (Man) threonine glycosylation sites follow: Thr677 and Thr762. Residues Asn786, Asn880, and Asn931 are each glycosylated (N-linked (GlcNAc...) asparagine). Residues Ile936–Leu956 form a helical membrane-spanning segment. The Cytoplasmic portion of the chain corresponds to Lys957–Glu1379. A Phosphoserine modification is found at Ser967. Phosphothreonine is present on Thr978. Residues Ser991, Ser998, and Ser1001 each carry the phosphoserine modification. Tyr1004 is subject to Phosphotyrosine. The 268-residue stretch at Val1079–Ile1346 folds into the Protein kinase domain. ATP-binding positions include Ile1085–Val1093 and Lys1111. Asp1205 serves as the catalytic Proton acceptor. Positions Leu1213 to Thr1382 are interaction with RANBP9. Tyr1231 bears the Phosphotyrosine mark. Phosphotyrosine; by autocatalysis is present on residues Tyr1235 and Tyr1236. Thr1290 is subject to Phosphothreonine. Residues Trp1321–Val1360 form an interaction with MUC20 region. Phosphotyrosine; by autocatalysis is present on residues Tyr1350 and Tyr1357. Tyr1366 carries the post-translational modification Phosphotyrosine.

Belongs to the protein kinase superfamily. Tyr protein kinase family. As to quaternary structure, heterodimer made of an alpha chain (50 kDa) and a beta chain (145 kDa) which are disulfide linked. Binds PLXNB1. Interacts when phosphorylated with downstream effectors including STAT3, PIK3R1, SRC, PCLG1, GRB2 and GAB1. Interacts with SPSB1, SPSB2 and SPSB4. Interacts with INPP5D/SHIP1. When phosphorylated at Tyr-1357, interacts with INPPL1/SHIP2. Interacts with RANBP9 and RANBP10, as well as SPSB1, SPSB2, SPSB3 and SPSB4. SPSB1 binding occurs in the presence and in the absence of HGF, however HGF treatment has a positive effect on this interaction. Interacts with MUC20; prevents interaction with GRB2 and suppresses hepatocyte growth factor-induced cell proliferation. Interacts with GRB10. Interacts with PTPN1 and PTPN2. Interacts with HSP90AA1 and HSP90AB1; the interaction suppresses MET kinase activity. Interacts with tensin TNS3. Interacts (when phosphorylated) with tensin TNS4 (via SH2 domain); the interaction increases MET protein stability by inhibiting MET endocytosis and subsequent lysosomal degradation. In terms of assembly, (Microbial infection) Interacts with L.monocytogenes InlB. InlB probably dimerizes upon binding to MET, which encourages subsequent dimerization of MET. In terms of processing, autophosphorylated in response to ligand binding on Tyr-1235 and Tyr-1236 in the kinase domain leading to further phosphorylation of Tyr-1350 and Tyr-1357 in the C-terminal multifunctional docking site. Dephosphorylated by PTPRJ at Tyr-1350 and Tyr-1366. Dephosphorylated by PTPN1 and PTPN2. Ubiquitinated. Ubiquitination by CBL regulates the receptor stability and activity through proteasomal degradation. Post-translationally, (Microbial infection) Tyrosine phosphorylation is stimulated by L.monocytogenes InlB. In terms of processing, O-mannosylation of IPT/TIG domains by TMEM260 is required for protein maturation. O-mannosylated residues are composed of single mannose glycans that are not elongated or modified.

It is found in the membrane. The enzyme catalyses L-tyrosyl-[protein] + ATP = O-phospho-L-tyrosyl-[protein] + ADP + H(+). With respect to regulation, in its inactive state, the C-terminal tail interacts with the catalytic domain and inhibits the kinase activity. Upon ligand binding, the C-terminal tail is displaced and becomes phosphorylated, thus increasing the kinase activity. Its function is as follows. Receptor tyrosine kinase that transduces signals from the extracellular matrix into the cytoplasm by binding to hepatocyte growth factor/HGF ligand. Regulates many physiological processes including proliferation, scattering, morphogenesis and survival. Ligand binding at the cell surface induces autophosphorylation of MET on its intracellular domain that provides docking sites for downstream signaling molecules. Following activation by ligand, interacts with the PI3-kinase subunit PIK3R1, PLCG1, SRC, GRB2, STAT3 or the adapter GAB1. Recruitment of these downstream effectors by MET leads to the activation of several signaling cascades including the RAS-ERK, PI3 kinase-AKT, or PLCgamma-PKC. The RAS-ERK activation is associated with the morphogenetic effects while PI3K/AKT coordinates prosurvival effects. During embryonic development, MET signaling plays a role in gastrulation, development and migration of muscles and neuronal precursors, angiogenesis and kidney formation. In adults, participates in wound healing as well as organ regeneration and tissue remodeling. Also promotes differentiation and proliferation of hematopoietic cells. (Microbial infection) Acts as a receptor for Listeria monocytogenes internalin InlB, mediating entry of the pathogen into cells. The sequence is that of Hepatocyte growth factor receptor (MET) from Canis lupus familiaris (Dog).